The chain runs to 1218 residues: Coatomer subunit alpha-2 (1218 aa).

WD repeat units lie at residues 7 to 48 (TKSN…DRFD), 49 to 88 (EHDGPVRGVHFHATQPLFVSGGDDYKIKVWNYKTHRCLFT), 91 to 132 (GHLD…AVLT), 133 to 172 (GHNHYVMCASFHPKEDLVVSASLDQTVRVWDISALRKKSV), 202 to 241 (GHDRGVNWASFHPTLPLIVSGADDRQVKIWRMNDTKAWEV), 246 to 285 (GHMNNVSCVMFHAKQDIIVSNSEDKSIRIWDATKRTGIQT), 288 to 326 (REHDRFWILSAHPEMNLLAAGHDSGMIVFKLERERPAFS), and 363 to 404 (SLNQ…AGRA). The interval 855–876 (MANGGDGFDAEEGEANEEDGEE) is disordered. Positions 862 to 876 (FDAEEGEANEEDGEE) are enriched in acidic residues.

Oligomeric complex that consists of at least the alpha, beta, beta', gamma, delta, epsilon and zeta subunits.

It is found in the cytoplasm. The protein resides in the golgi apparatus membrane. It localises to the cytoplasmic vesicle. Its subcellular location is the COPI-coated vesicle membrane. In terms of biological role, the coatomer is a cytosolic protein complex that binds to dilysine motifs and reversibly associates with Golgi non-clathrin-coated vesicles, which further mediate biosynthetic protein transport from the ER, via the Golgi up to the trans Golgi network. Coatomer complex is required for budding from Golgi membranes, and is essential for the retrograde Golgi-to-ER transport of dilysine-tagged proteins. The polypeptide is Coatomer subunit alpha-2 (Oryza sativa subsp. japonica (Rice)).